The primary structure comprises 96 residues: Putative septation protein SpoVG (96 aa).

The protein belongs to the SpoVG family.

In terms of biological role, could be involved in septation. In Phytoplasma australiense, this protein is Putative septation protein SpoVG.